Here is a 762-residue protein sequence, read N- to C-terminus: Cell surface protein (762 aa).

Residues 1–26 (MKNLKKLIAVVSTFALVFSAMAVGFA) form the signal peptide. 3 consecutive SLH domains span residues 27 to 90 (ATTP…EMAK), 92 to 155 (EKSA…WPYG), and 156 to 204 (YLAK…KEVL). Residues tyrosine 297, tyrosine 516, tyrosine 520, and tyrosine 632 are each glycosylated (O-linked (Glc...) tyrosine).

In terms of processing, glycosylated; contains 8% carbohydrates, which correspond to about 40 to 50 sugar molecules per monomer. O-linked glycans consist of Glc, GalNAc and GlcNAc.

It localises to the secreted. It is found in the cell wall. The protein resides in the S-layer. Functionally, the S-layer is a paracrystalline mono-layered assembly of proteins which coat the surface of bacteria. This Thermoanaerobacter kivui (Acetogenium kivui) protein is Cell surface protein.